Consider the following 520-residue polypeptide: Chaperone Ric-8B (520 aa).

A Phosphoserine modification is found at Ser468. Thr473 is modified (phosphothreonine).

This sequence belongs to the synembryn family. In terms of assembly, interacts with GDP-bound G(s) G-alpha proteins GNAL and GNAS. Does not interact with G-alpha proteins when they are in complex with subunits beta and gamma.

It is found in the cytoplasm. The protein localises to the cell cortex. In terms of biological role, chaperone that specifically binds and folds nascent G(s) G-alpha proteins (GNAS and GNAL) prior to G protein heterotrimer formation, promoting their association with the plasma membrane. Also acts as a guanine nucleotide exchange factor (GEF) for G(s) proteins by stimulating exchange of bound GDP for free GTP. Acts as an important component for odorant signal transduction by mediating GNAL (G(olf)-alpha) folding, thereby promoting-dependent cAMP accumulation in olfactory sensory neurons. The polypeptide is Chaperone Ric-8B (Ric8b) (Rattus norvegicus (Rat)).